A 376-amino-acid chain; its full sequence is S-adenosylmethionine synthase (376 aa).

Residue H14 coordinates ATP. D16 lines the Mg(2+) pocket. E42 provides a ligand contact to K(+). L-methionine contacts are provided by E55 and Q98. Positions 98–108 (QSPEIALGISS) are flexible loop. ATP is bound by residues 158-160 (DGK), 224-225 (RF), D233, 239-240 (RK), A256, and K260. D233 provides a ligand contact to L-methionine. K264 lines the L-methionine pocket.

Belongs to the AdoMet synthase family. As to quaternary structure, homotetramer; dimer of dimers. Requires Mg(2+) as cofactor. The cofactor is K(+).

It localises to the cytoplasm. The enzyme catalyses L-methionine + ATP + H2O = S-adenosyl-L-methionine + phosphate + diphosphate. Its pathway is amino-acid biosynthesis; S-adenosyl-L-methionine biosynthesis; S-adenosyl-L-methionine from L-methionine: step 1/1. Its function is as follows. Catalyzes the formation of S-adenosylmethionine (AdoMet) from methionine and ATP. The overall synthetic reaction is composed of two sequential steps, AdoMet formation and the subsequent tripolyphosphate hydrolysis which occurs prior to release of AdoMet from the enzyme. This chain is S-adenosylmethionine synthase, found in Aquifex aeolicus (strain VF5).